A 344-amino-acid chain; its full sequence is Galactoside alpha-(1,2)-fucosyltransferase 2 (344 aa).

Topologically, residues 1 to 7 (MFSTQTF) are cytoplasmic. The helical; Signal-anchor for type II membrane protein transmembrane segment at 8-28 (FFFPTAPFILFVFTASTIFHL) threads the bilayer. Topologically, residues 29–344 (HQRLEKMQPT…PADLSPLLKH (316 aa)) are lumenal. Asn189, Asn255, Asn283, and Asn309 each carry an N-linked (GlcNAc...) asparagine glycan.

In terms of tissue distribution, expressed in brain, heart, lung, intestin and kidney.

It localises to the golgi apparatus. Its subcellular location is the golgi stack membrane. It carries out the reaction a beta-D-galactosyl-(1-&gt;3)-N-acetyl-beta-D-glucosaminyl derivative + GDP-beta-L-fucose = an alpha-L-Fuc-(1-&gt;2)-beta-D-Gal-(1-&gt;3)-beta-D-GlcNAc derivative + GDP + H(+). It catalyses the reaction a beta-D-galactosyl-(1-&gt;4)-N-acetyl-beta-D-glucosaminyl derivative + GDP-beta-L-fucose = an alpha-L-Fuc-(1-&gt;2)-beta-D-Gal-(1-&gt;4)-beta-D-GlcNAc derivative + GDP + H(+). The catalysed reaction is a ganglioside GM1 + GDP-beta-L-fucose = a ganglioside Fuc-GM1 + GDP + H(+). The enzyme catalyses a neolactoside nLc4Cer + GDP-beta-L-fucose = a neolactoside IV(2)-alpha-Fuc-nLc4Cer + GDP + H(+). It carries out the reaction a neolactoside nLc4Cer(d18:1(4E)) + GDP-beta-L-fucose = a neolactoside IV(2)-alpha-Fuc-nLc4Cer(d18:1(4E)) + GDP + H(+). It catalyses the reaction a ganglioside GA1 + GDP-beta-L-fucose = a ganglioside Fuc-GA1 + GDP + H(+). The catalysed reaction is Lc4Cer + GDP-beta-L-fucose = alpha-L-fucosyl-(1-&gt;2)-beta-D-galactosyl-(1-&gt;3)-N-acetyl-beta-D-glucosaminyl-(1-&gt;3)-beta-D-galactosyl-(1-&gt;4)-beta-D-glucosyl-(1&lt;-&gt;1')-ceramide + GDP + H(+). The enzyme catalyses a beta-D-Gal-(1-&gt;3)-beta-D-GlcNAc-(1-&gt;3)-beta-D-Gal-(1-&gt;4)-beta-D-Glc-(1&lt;-&gt;1')-Cer(d18:1(4E)) + GDP-beta-L-fucose = alpha-L-fucosyl-(1-&gt;2)- beta-D-galactosyl-(1-&gt;3)-N-acetyl-beta-D-glucosaminyl-(1-&gt;3)-beta-D-galactosyl-(1-&gt;4)-beta-D-glucosyl-(1&lt;-&gt;1')-N-acylsphing-4-enine + GDP + H(+). It carries out the reaction a ganglioside GD1b + GDP-beta-L-fucose = a ganglioside Fuc-GD1b + GDP + H(+). It catalyses the reaction a ganglioside GM1 (d18:1(4E)) + GDP-beta-L-fucose = a ganglioside Fuc-GM1 (d18:1(4E)) + GDP + H(+). The catalysed reaction is a globoside GalGb4Cer (d18:1(4E)) + GDP-beta-L-fucose = a globoside Globo-H (d18:1(4E)) + GDP + H(+). The enzyme catalyses a lactoside III(4)-a-Fuc-Lc4Cer + GDP-beta-L-fucose = a lactoside IV(2),III(4)-a-[Fuc]2-Lc4Cer + GDP + H(+). It carries out the reaction beta-D-galactosyl-(1-&gt;3)-N-acetyl-D-galactosamine + GDP-beta-L-fucose = alpha-L-fucosyl-(1-&gt;2)-beta-D-galactosyl-(1-&gt;3)-N-acetyl-D-galactosamine + GDP + H(+). It participates in protein modification; protein glycosylation. Its function is as follows. Catalyzes the transfer of L-fucose, from a guanosine diphosphate-beta-L-fucose, to the terminal galactose on both O- and N-linked glycans chains of cell surface glycoproteins and glycolipids and the resulting epitope regulates several processes such as cell-cell interaction including host-microbe interaction, cell surface expression and cell proliferation. Preferentially fucosylates gangliosides GA1 and GM1 in the antrum, cecum and colon and in the female reproductive organs. Fucosylated host glycoproteins or glycolipids mediate interaction with intestinal microbiota influencing its composition. Creates a soluble precursor oligosaccharide FuC-alpha ((1,2)Galbeta-) called the H antigen which is an essential substrate for the final step in the soluble ABO blood group antigen synthesis pathway. The chain is Galactoside alpha-(1,2)-fucosyltransferase 2 from Bos taurus (Bovine).